Here is a 338-residue protein sequence, read N- to C-terminus: Uroporphyrinogen decarboxylase (338 aa).

Substrate contacts are provided by residues 23–27, D72, Y146, T201, and H312; that span reads RQAGR.

Belongs to the uroporphyrinogen decarboxylase family. In terms of assembly, homodimer.

The protein resides in the cytoplasm. It catalyses the reaction uroporphyrinogen III + 4 H(+) = coproporphyrinogen III + 4 CO2. It participates in porphyrin-containing compound metabolism; protoporphyrin-IX biosynthesis; coproporphyrinogen-III from 5-aminolevulinate: step 4/4. Its function is as follows. Catalyzes the decarboxylation of four acetate groups of uroporphyrinogen-III to yield coproporphyrinogen-III. In Thermodesulfovibrio yellowstonii (strain ATCC 51303 / DSM 11347 / YP87), this protein is Uroporphyrinogen decarboxylase.